Consider the following 210-residue polypeptide: Uridine kinase (210 aa).

Position 12 to 19 (12 to 19 (GGSGGGKT)) interacts with ATP.

Belongs to the uridine kinase family.

The protein resides in the cytoplasm. It carries out the reaction uridine + ATP = UMP + ADP + H(+). The enzyme catalyses cytidine + ATP = CMP + ADP + H(+). It participates in pyrimidine metabolism; CTP biosynthesis via salvage pathway; CTP from cytidine: step 1/3. Its pathway is pyrimidine metabolism; UMP biosynthesis via salvage pathway; UMP from uridine: step 1/1. This chain is Uridine kinase, found in Streptococcus uberis (strain ATCC BAA-854 / 0140J).